Reading from the N-terminus, the 35-residue chain is Photosystem II reaction center protein M (35 aa).

The helical transmembrane segment at 7 to 27 (GFLASLLFVLVPSVFLIVLYI) threads the bilayer.

This sequence belongs to the PsbM family. As to quaternary structure, PSII is composed of 1 copy each of membrane proteins PsbA, PsbB, PsbC, PsbD, PsbE, PsbF, PsbH, PsbI, PsbJ, PsbK, PsbL, PsbM, PsbT, PsbX, PsbY, PsbZ, Psb30/Ycf12, peripheral proteins PsbO, CyanoQ (PsbQ), PsbU, PsbV and a large number of cofactors. It forms dimeric complexes.

It localises to the cellular thylakoid membrane. Its function is as follows. One of the components of the core complex of photosystem II (PSII). PSII is a light-driven water:plastoquinone oxidoreductase that uses light energy to abstract electrons from H(2)O, generating O(2) and a proton gradient subsequently used for ATP formation. It consists of a core antenna complex that captures photons, and an electron transfer chain that converts photonic excitation into a charge separation. This subunit is found at the monomer-monomer interface. This is Photosystem II reaction center protein M from Synechococcus elongatus (strain ATCC 33912 / PCC 7942 / FACHB-805) (Anacystis nidulans R2).